The primary structure comprises 697 residues: Potassium-transporting ATPase ATP-binding subunit (697 aa).

The next 4 membrane-spanning stretches (helical) occupy residues Pro55–Ser75, Ser79–Ala99, Leu245–Phe265, and Val271–Ile291. The active-site 4-aspartylphosphate intermediate is the Asp324. ATP is bound by residues Asp361, Glu365, Phe393–Ser400, and Lys412. 2 residues coordinate Mg(2+): Asp535 and Asp539. 3 helical membrane-spanning segments follow: residues Phe605–Met625, Ala633–Met653, and Gly677–Ile697.

Belongs to the cation transport ATPase (P-type) (TC 3.A.3) family. Type IA subfamily. As to quaternary structure, the system is composed of three essential subunits: KdpA, KdpB and KdpC.

The protein resides in the cell membrane. The enzyme catalyses K(+)(out) + ATP + H2O = K(+)(in) + ADP + phosphate + H(+). Its function is as follows. Part of the high-affinity ATP-driven potassium transport (or Kdp) system, which catalyzes the hydrolysis of ATP coupled with the electrogenic transport of potassium into the cytoplasm. This subunit is responsible for energy coupling to the transport system and for the release of the potassium ions to the cytoplasm. This chain is Potassium-transporting ATPase ATP-binding subunit, found in Bacillus cereus (strain B4264).